The primary structure comprises 364 residues: Aminomethyltransferase (364 aa).

It belongs to the GcvT family. In terms of assembly, the glycine cleavage system is composed of four proteins: P, T, L and H.

It carries out the reaction N(6)-[(R)-S(8)-aminomethyldihydrolipoyl]-L-lysyl-[protein] + (6S)-5,6,7,8-tetrahydrofolate = N(6)-[(R)-dihydrolipoyl]-L-lysyl-[protein] + (6R)-5,10-methylene-5,6,7,8-tetrahydrofolate + NH4(+). In terms of biological role, the glycine cleavage system catalyzes the degradation of glycine. In Thermotoga petrophila (strain ATCC BAA-488 / DSM 13995 / JCM 10881 / RKU-1), this protein is Aminomethyltransferase.